Reading from the N-terminus, the 313-residue chain is Homoserine O-acetyltransferase (313 aa).

Cys-142 functions as the Acyl-thioester intermediate in the catalytic mechanism. Substrate-binding residues include Lys-163 and Ser-191. His-234 functions as the Proton acceptor in the catalytic mechanism. The active site involves Glu-236. Arg-248 is a substrate binding site.

This sequence belongs to the MetA family.

The protein localises to the cytoplasm. The enzyme catalyses L-homoserine + acetyl-CoA = O-acetyl-L-homoserine + CoA. Its pathway is amino-acid biosynthesis; L-methionine biosynthesis via de novo pathway; O-acetyl-L-homoserine from L-homoserine: step 1/1. Functionally, transfers an acetyl group from acetyl-CoA to L-homoserine, forming acetyl-L-homoserine. The polypeptide is Homoserine O-acetyltransferase (Streptococcus sanguinis (strain SK36)).